The sequence spans 254 residues: D-aminoacyl-tRNA deacylase (254 aa).

Positions 61-85 (KPTLTVHTPGNLTEDNSRGGNSEEI) are disordered. Polar residues predominate over residues 65-84 (TVHTPGNLTEDNSRGGNSEE).

It belongs to the DtdA deacylase family. As to quaternary structure, monomer. Zn(2+) serves as cofactor.

The catalysed reaction is a D-aminoacyl-tRNA + H2O = a tRNA + a D-alpha-amino acid + H(+). It catalyses the reaction glycyl-tRNA(Ala) + H2O = tRNA(Ala) + glycine + H(+). Its function is as follows. D-aminoacyl-tRNA deacylase with broad substrate specificity. By recycling D-aminoacyl-tRNA to D-amino acids and free tRNA molecules, this enzyme counteracts the toxicity associated with the formation of D-aminoacyl-tRNA entities in vivo. This is D-aminoacyl-tRNA deacylase from Methanococcus maripaludis (strain C5 / ATCC BAA-1333).